The sequence spans 103 residues: RNA-binding protein Hfq (103 aa).

The Sm domain occupies 9-68 (DPFLNALRRERVPVSIYLVNGIKLQGQIESFDQFVILLKNTVSQMVYKHAISTVVPSRPV). The tract at residues 63-103 (VPSRPVSHHSNNAGGGTGSNFHHGSNAQGSSAPAQDSDETE) is disordered. Residues 81 to 96 (SNFHHGSNAQGSSAPA) are compositionally biased toward polar residues.

It belongs to the Hfq family. Homohexamer.

RNA chaperone that binds small regulatory RNA (sRNAs) and mRNAs to facilitate mRNA translational regulation in response to envelope stress, environmental stress and changes in metabolite concentrations. Also binds with high specificity to tRNAs. This is RNA-binding protein Hfq from Enterobacter sp. (strain 638).